Consider the following 339-residue polypeptide: Glycerol-3-phosphate dehydrogenase [NAD(P)+] (339 aa).

NADPH is bound by residues S15, Y16, H36, and K110. Sn-glycerol 3-phosphate is bound by residues K110, G139, and T141. A143 serves as a coordination point for NADPH. Positions 195, 248, 258, 259, and 260 each coordinate sn-glycerol 3-phosphate. K195 acts as the Proton acceptor in catalysis. R259 is a binding site for NADPH. Positions 283 and 285 each coordinate NADPH.

It belongs to the NAD-dependent glycerol-3-phosphate dehydrogenase family.

Its subcellular location is the cytoplasm. It catalyses the reaction sn-glycerol 3-phosphate + NAD(+) = dihydroxyacetone phosphate + NADH + H(+). It carries out the reaction sn-glycerol 3-phosphate + NADP(+) = dihydroxyacetone phosphate + NADPH + H(+). Its pathway is membrane lipid metabolism; glycerophospholipid metabolism. Its function is as follows. Catalyzes the reduction of the glycolytic intermediate dihydroxyacetone phosphate (DHAP) to sn-glycerol 3-phosphate (G3P), the key precursor for phospholipid synthesis. This Salmonella agona (strain SL483) protein is Glycerol-3-phosphate dehydrogenase [NAD(P)+].